Reading from the N-terminus, the 340-residue chain is tRNA N6-adenosine threonylcarbamoyltransferase (340 aa).

Histidine 111 and histidine 115 together coordinate Fe cation. Substrate is bound by residues 134-138, aspartate 167, glycine 180, and asparagine 273; that span reads IISGA. Residue aspartate 301 coordinates Fe cation.

The protein belongs to the KAE1 / TsaD family. It depends on Fe(2+) as a cofactor.

The protein localises to the cytoplasm. The enzyme catalyses L-threonylcarbamoyladenylate + adenosine(37) in tRNA = N(6)-L-threonylcarbamoyladenosine(37) in tRNA + AMP + H(+). Required for the formation of a threonylcarbamoyl group on adenosine at position 37 (t(6)A37) in tRNAs that read codons beginning with adenine. Is involved in the transfer of the threonylcarbamoyl moiety of threonylcarbamoyl-AMP (TC-AMP) to the N6 group of A37, together with TsaE and TsaB. TsaD likely plays a direct catalytic role in this reaction. The protein is tRNA N6-adenosine threonylcarbamoyltransferase of Wigglesworthia glossinidia brevipalpis.